The primary structure comprises 83 residues: Large ribosomal subunit protein bL27 (83 aa).

This sequence belongs to the bacterial ribosomal protein bL27 family.

This chain is Large ribosomal subunit protein bL27, found in Bifidobacterium adolescentis (strain ATCC 15703 / DSM 20083 / NCTC 11814 / E194a).